We begin with the raw amino-acid sequence, 601 residues long: Threonine dehydratase (601 aa).

The N-terminal 51 residues, 1–51 (MEVLCQAPAGNSNFACNPKFTAIRTRAISSNDTFKVISSTGNNKKMKGAIR), are a transit peptide targeting the chloroplast. 2 consecutive ACT-like domains span residues 427–499 (ALLA…NLTN) and 521–592 (IFCQ…IESL).

This sequence belongs to the serine/threonine dehydratase family. Pyridoxal 5'-phosphate is required as a cofactor.

It is found in the plastid. Its subcellular location is the chloroplast. The catalysed reaction is L-threonine = 2-oxobutanoate + NH4(+). Its pathway is amino-acid biosynthesis; L-isoleucine biosynthesis; 2-oxobutanoate from L-threonine: step 1/1. Its function is as follows. Catalyzes the conversion of threonine to alpha-keto butyrate in isoleucine (Ile) biosynthesis. Required for JA-Ile biosynthesis, a signaling molecule involved in defense and resistance to the herbivore Manduca sexta caterpillars. The chain is Threonine dehydratase from Nicotiana attenuata (Coyote tobacco).